The sequence spans 381 residues: Probable tRNA sulfurtransferase (381 aa).

In terms of domain architecture, THUMP spans 52-155 (LTNLDALKYV…DASTYIFIDY (104 aa)). Residues 173–174 (LM), 198–199 (NF), Arg-255, Gly-277, and Gln-286 contribute to the ATP site.

It belongs to the ThiI family.

The protein resides in the cytoplasm. It carries out the reaction [ThiI sulfur-carrier protein]-S-sulfanyl-L-cysteine + a uridine in tRNA + 2 reduced [2Fe-2S]-[ferredoxin] + ATP + H(+) = [ThiI sulfur-carrier protein]-L-cysteine + a 4-thiouridine in tRNA + 2 oxidized [2Fe-2S]-[ferredoxin] + AMP + diphosphate. It catalyses the reaction [ThiS sulfur-carrier protein]-C-terminal Gly-Gly-AMP + S-sulfanyl-L-cysteinyl-[cysteine desulfurase] + AH2 = [ThiS sulfur-carrier protein]-C-terminal-Gly-aminoethanethioate + L-cysteinyl-[cysteine desulfurase] + A + AMP + 2 H(+). The protein operates within cofactor biosynthesis; thiamine diphosphate biosynthesis. In terms of biological role, catalyzes the ATP-dependent transfer of a sulfur to tRNA to produce 4-thiouridine in position 8 of tRNAs, which functions as a near-UV photosensor. Also catalyzes the transfer of sulfur to the sulfur carrier protein ThiS, forming ThiS-thiocarboxylate. This is a step in the synthesis of thiazole, in the thiamine biosynthesis pathway. The sulfur is donated as persulfide by IscS. In Metamycoplasma arthritidis (strain 158L3-1) (Mycoplasma arthritidis), this protein is Probable tRNA sulfurtransferase.